The following is a 78-amino-acid chain: MTRHLIFAAMLLVCLFVCWNAVGARDARSAFSLEETAQDEHVMEERIFINPAGNREKNACLENCRSSPNCENYEFCSK.

Residues 1 to 24 form the signal peptide; it reads MTRHLIFAAMLLVCLFVCWNAVGA. The propeptide occupies 25 to 28; the sequence is RDAR.

This sequence belongs to the scoloptoxin-04 family. Post-translationally, contains 2 disulfide bonds. Expressed by the venom gland.

It localises to the secreted. The protein is U-scoloptoxin(04)-Er1d of Ethmostigmus rubripes (Giant centipede).